We begin with the raw amino-acid sequence, 645 residues long: MNQINIQFPDGNTKEFDKGTTTEDIAQSISPGLRKKAVAGKFNGQLVDLTRPLEQDGAIEIITPGSEEALEVLRHSTAHLMAQALKRLYGDVKFGVGPVIEGGFYYDFDMDDKVSSDDFDKIEKTMKQIVNENHKIVREVVSKEKAKDFFKDDPYKLELIDAIPEDESVTLYTQGEFTDLCRGVHVPSTSKIKEFKLLSTAGAYWRGNSDNKMLQRIYGTAFFDKKDLKAHLKMLEERRERDHRKIGKDLELFTNNQLVGAGLPLWLPNGATIRREIERYIVDKEVSMGYDHVYTPVLANVDLYKTSGHWDHYQEDMFPAMKLDEDEAMVLRPMNCPHHMMIYKNKPHSYRELPIRIAELGTMHRYEASGAVSGLQRVRGMTLNDSHIFVRPDQIKEEFKRVVNMIQDVYKDFGFEDYRFRLSYRDPEDKHKYFDDDEMWEKAESMLKEASDELGLTYEEAIGEAAFYGPKLDVQVKTAMGKEETLSTAQLDFLLPERFDLTYIGQDGEQHRPVVIHRGVVSTMERFVAFLTEETKGAFPTWLAPMQVEIIPVNIDLHYDYARLLQDELKSQGVRVEIDDRNEKMGYKIREAQMKKIPYQIVVGDQEVENQEVNVRKYGSEKQESVEKDEFIWNVIDEIRLKKHR.

One can recognise a TGS domain in the interval 1 to 63 (MNQINIQFPD…EQDGAIEIIT (63 aa)). The catalytic stretch occupies residues 242–540 (DHRKIGKDLE…LTEETKGAFP (299 aa)). Zn(2+)-binding residues include Cys336, His387, and His517.

Belongs to the class-II aminoacyl-tRNA synthetase family. Homodimer. Zn(2+) serves as cofactor.

Its subcellular location is the cytoplasm. It catalyses the reaction tRNA(Thr) + L-threonine + ATP = L-threonyl-tRNA(Thr) + AMP + diphosphate + H(+). In terms of biological role, catalyzes the attachment of threonine to tRNA(Thr) in a two-step reaction: L-threonine is first activated by ATP to form Thr-AMP and then transferred to the acceptor end of tRNA(Thr). Also edits incorrectly charged L-seryl-tRNA(Thr). The sequence is that of Threonine--tRNA ligase from Staphylococcus epidermidis (strain ATCC 35984 / DSM 28319 / BCRC 17069 / CCUG 31568 / BM 3577 / RP62A).